We begin with the raw amino-acid sequence, 586 residues long: MATSGVEKSSKKKTEKKLAAREEAKLLAGFMGVMNNMRKQRTLCDVILTVQERKIPAHRVVLAAASHFFNLMFTTNMLESKSFEVELKDAEPDIIEQLVEFAYTARISVNSNNVQSLLDAANQYQIEPVKKMCVDFLKEQVDASNCLGISVLAECLDCPELKATADDFIHQHFTEVYKTDEFLQLDVKRVTHLLSQDTLTVRAEDQVYDAAVRWLKYDEPNRQPFMVDILAKVRFPLISKNFLSKTVQAEPLIQDNPECLKMVISGMRYHLLSPEDREELAGGTRPRRKKHDYRIALFGGSQPQSCRYFNPKDYSWTDIRCPFEKRRDAACVFWDNVVYILGGSQLFPIKRMDCYNVVKDSWYSKLGPPTPRDSLAACAAEGKIYTSGGSEVGNSALYLFECYDTRTESWHTKPSMLTQRCSHGMVEANGLIYVCGGSLGNNVSGRVLSSCEVYDPATETWTELCSMIEPRKNHGLVFVKDKIFAVGGQNGLGGLDNVEYYDIKLNEWKMVSPMPWRGVTVKCAAVGSVIYVLAGFQGVGRLGHILEYNTETDKWIANSKVRAFPVTSCLICVVDTCGANEETLET.

In terms of domain architecture, BTB spans 44–111 (CDVILTVQER…AYTARISVNS (68 aa)). Residues 146–248 (CLGISVLAEC…SKNFLSKTVQ (103 aa)) form the BACK domain. Kelch repeat units follow at residues 294–336 (RIAL…FWDN), 337–382 (VVYI…AAEG), 383–430 (KIYT…EANG), 431–481 (LIYV…FVKD), 483–528 (IFAV…AVGS), and 530–575 (IYVL…CVVD).

Homodimer. Component of the BCR(KLHL7) E3 ubiquitin ligase complex, at least composed of CUL3 and KLHL7 and RBX1.

It localises to the nucleus. The protein localises to the cytoplasm. It participates in protein modification; protein ubiquitination. Functionally, substrate-specific adapter of a BCR (BTB-CUL3-RBX1) E3 ubiquitin ligase complex. The BCR(KLHL7) complex acts by mediating ubiquitination and subsequent degradation of substrate proteins. Probably mediates 'Lys-48'-linked ubiquitination. This chain is Kelch-like protein 7 (Klhl7), found in Mus musculus (Mouse).